Consider the following 113-residue polypeptide: Small ribosomal subunit protein bS18 (113 aa).

The disordered stretch occupies residues 1–41 (MSEEKIVNTEAAPEAVAERPARAERSERPERPAKGPFGKKR). Residues 16–33 (VAERPARAERSERPERPA) are compositionally biased toward basic and acidic residues.

The protein belongs to the bacterial ribosomal protein bS18 family. In terms of assembly, part of the 30S ribosomal subunit. Forms a tight heterodimer with protein bS6.

Its function is as follows. Binds as a heterodimer with protein bS6 to the central domain of the 16S rRNA, where it helps stabilize the platform of the 30S subunit. The polypeptide is Small ribosomal subunit protein bS18 (Elusimicrobium minutum (strain Pei191)).